A 491-amino-acid chain; its full sequence is Ketol-acid reductoisomerase (NADP(+)) (491 aa).

The KARI N-terminal Rossmann domain maps to 16–207 (IKKCRFMKEN…GGHRAGVLES (192 aa)). Residues 44-47 (CGSQ), Lys67, Ser77, and 107-109 (DKQ) each bind NADP(+). His131 is a catalytic residue. Residue Gly157 coordinates NADP(+). KARI C-terminal knotted domains lie at 208–344 (SFIA…NILS) and 345–484 (YSEK…MKEM). The Mg(2+) site is built by Asp216, Glu220, Glu389, and Glu393. Substrate is bound at residue Ser414.

This sequence belongs to the ketol-acid reductoisomerase family. It depends on Mg(2+) as a cofactor.

It carries out the reaction (2R)-2,3-dihydroxy-3-methylbutanoate + NADP(+) = (2S)-2-acetolactate + NADPH + H(+). The enzyme catalyses (2R,3R)-2,3-dihydroxy-3-methylpentanoate + NADP(+) = (S)-2-ethyl-2-hydroxy-3-oxobutanoate + NADPH + H(+). The protein operates within amino-acid biosynthesis; L-isoleucine biosynthesis; L-isoleucine from 2-oxobutanoate: step 2/4. It functions in the pathway amino-acid biosynthesis; L-valine biosynthesis; L-valine from pyruvate: step 2/4. In terms of biological role, involved in the biosynthesis of branched-chain amino acids (BCAA). Catalyzes an alkyl-migration followed by a ketol-acid reduction of (S)-2-acetolactate (S2AL) to yield (R)-2,3-dihydroxy-isovalerate. In the isomerase reaction, S2AL is rearranged via a Mg-dependent methyl migration to produce 3-hydroxy-3-methyl-2-ketobutyrate (HMKB). In the reductase reaction, this 2-ketoacid undergoes a metal-dependent reduction by NADPH to yield (R)-2,3-dihydroxy-isovalerate. The sequence is that of Ketol-acid reductoisomerase (NADP(+)) from Buchnera aphidicola subsp. Schizaphis graminum (strain Sg).